The chain runs to 1169 residues: MYLKTIKLAGFKSFVDPTLIPIRGSMNAIVGPNGCGKSNVVDAVRWVIGETSAKQLRGQSMSDVIFNGTTSRKPVGKASIELHFDNSEGRIGGEYAKYGEIAIRREVERDGQSNYFINGAHVRRRDVVDVFLGTGLGPRSYAIVEQGMISNLIEAKPEELRVYIEEAAGISKYKERRRETESRMRHTQENLDRVNDIAEELAKQLRHLKRQANAAERYKAYKQEERALGAQFKVLQWKALDHKLSEHDQAINQKNTRREEKQSEQHRIETEIEKMREQLTDVNEKHNAVQKRYYGLGADIARLEQRIKDTQEKIHQWQSELEENENVWEELQNNTAECEAQITELETELEHLKPRSSDIHSAAAEASKELAQAESNMARWQEAWEAFQAETSQTMSQLEVMRTKREHCERQLTDLEKSKQQLQQNLKQLQLDQLLNEIAPLSSQSELLNAELSDSQSKLQSLAETIASRRDANQTTREELQTQRRELQALEARAASLEALQKAALGESDGKISEWLSSQQLKENPRLGQKLVVNPGWEIAVETVLSGFFDAVCVDAALPFLTDLTTVSEGRVTLVEKKSVSASAFDKAPTLASQVKSEWPFQQWLAGIYIADTLDQAKQLQSSLQENESVITKEGLWLGPHWARISKLQDAPQSGFLLREQQLKQLKANILGQQKKCDEQEALLKSGEQQLNQLETDRDTLLQTYQKLNAEATTVQSALSTKQAQLDNAQQQQTRLKIGLNECEQQIEQCQQQLTLIKNKASSLDDSQGLLATRREEMIRERDHYRTQLIELREKAHQKRKEADELEIRLASNEDQLSLLRQTVARDQRQLKQLTERREMLSQYLSEGDKPLEELNEKLQTQLEQRLILETELREVEKELEEANQLLRHLEEKRVSTQKALNEAQAQLEELRMQRQTVSVRQTTIKEQLSENDFDLEQVMAELPEEATIESWQEKLDQLVERIQRMGPINLAAIEEYESVNERKNYLDKQHADLTEALEILKNAIHKIDRETRAKFQETYDQVNQQFQSLFPRIFGGGRATLEMTDTDLLTAGVIVRAQPPGKRNVTIHMLSGGEKALTAVALVFSLFQLNPAPFCILDEVDAPLDDINVGRFCQLVKEMSKEVQFLVISHNKVTIEMADYLMGVTMQEPGVSRIVSVNMQEAIGLVEA.

32–39 (PNGCGKSN) is an ATP binding site. Coiled-coil stretches lie at residues 170 to 507 (ISKY…ALGE) and 659 to 1030 (REQQ…FQSL).

It belongs to the SMC family. Homodimer.

The protein resides in the cytoplasm. Functionally, required for chromosome condensation and partitioning. This Coxiella burnetii (strain RSA 493 / Nine Mile phase I) protein is Chromosome partition protein Smc.